Consider the following 421-residue polypeptide: ATP-dependent RNA helicase RhlB (421 aa).

Residues 9 to 37 (QKFSDFALHPQVVEALEKKRFYNCTPIQA) carry the Q motif motif. Residues 40-219 (LPLTLAGRDV…FEQMNNAEYV (180 aa)) form the Helicase ATP-binding domain. 53 to 60 (AQTGTGKT) is an ATP binding site. The DEAD box signature appears at 165 to 168 (DEAD). Residues 245 to 390 (RLLQTLIEEE…VSKYNPEALM (146 aa)) enclose the Helicase C-terminal domain. The tract at residues 396 to 421 (PLRLTRSRPGNGPRRAGAPRNRRRSG) is disordered. Positions 402–414 (SRPGNGPRRAGAP) are enriched in low complexity.

It belongs to the DEAD box helicase family. RhlB subfamily. In terms of assembly, component of the RNA degradosome, which is a multiprotein complex involved in RNA processing and mRNA degradation.

The protein localises to the cytoplasm. The enzyme catalyses ATP + H2O = ADP + phosphate + H(+). Functionally, DEAD-box RNA helicase involved in RNA degradation. Has RNA-dependent ATPase activity and unwinds double-stranded RNA. The polypeptide is ATP-dependent RNA helicase RhlB (Salmonella dublin (strain CT_02021853)).